The following is a 302-amino-acid chain: Protein FdhE homolog (302 aa).

This sequence belongs to the FdhE family.

It is found in the cytoplasm. Functionally, necessary for formate dehydrogenase activity. The sequence is that of Protein FdhE homolog from Shewanella oneidensis (strain ATCC 700550 / JCM 31522 / CIP 106686 / LMG 19005 / NCIMB 14063 / MR-1).